Reading from the N-terminus, the 199-residue chain is Large ribosomal subunit protein bL25 (199 aa).

It belongs to the bacterial ribosomal protein bL25 family. CTC subfamily. Part of the 50S ribosomal subunit; part of the 5S rRNA/L5/L18/L25 subcomplex. Contacts the 5S rRNA. Binds to the 5S rRNA independently of L5 and L18.

This is one of the proteins that binds to the 5S RNA in the ribosome where it forms part of the central protuberance. This Pseudomonas fluorescens (strain ATCC BAA-477 / NRRL B-23932 / Pf-5) protein is Large ribosomal subunit protein bL25.